A 972-amino-acid polypeptide reads, in one-letter code: FHF complex subunit HOOK-interacting protein 1B (972 aa).

4 disordered regions span residues 465 to 496 (APSP…VPRP), 510 to 547 (SLSG…AGEL), 573 to 642 (SAPY…PGSW), and 710 to 733 (SFTC…NQLP). Position 467 is a phosphoserine (serine 467). The span at 479 to 490 (GPGSPSVDSSSV) shows a compositional bias: low complexity. 4 positions are modified to phosphoserine: serine 510, serine 523, serine 529, and serine 533. Residues 523–535 (SPGLSASPASSPG) show a composition bias toward low complexity. Over residues 618–627 (GLAGGAGEGP) the composition is skewed to gly residues. Phosphoserine is present on residues serine 859 and serine 897.

Belongs to the FHIP family. In terms of assembly, component of the FTS/Hook/FHIP complex (FHF complex), composed of AKTIP/FTS, FHIP1B, and one or more members of the Hook family of proteins HOOK1, HOOK2, and HOOK3. The FHF complex associates with the homotypic vesicular sorting complex (the HOPS complex).

Component of the FTS/Hook/FHIP complex (FHF complex). The FHF complex may function to promote vesicle trafficking and/or fusion via the homotypic vesicular protein sorting complex (the HOPS complex). FHF complex promotes the distribution of AP-4 complex to the perinuclear area of the cell. The polypeptide is FHF complex subunit HOOK-interacting protein 1B (FHIP1B) (Pongo abelii (Sumatran orangutan)).